The primary structure comprises 606 residues: Transmembrane 9 superfamily member 1 (606 aa).

Residues 1 to 27 (MTVLGYPRSWSCHCLPVLILLLGIGHG) form the signal peptide. A glycan (N-linked (GlcNAc...) asparagine) is linked at asparagine 178. The next 4 membrane-spanning stretches (helical) occupy residues 237-257 (LSII…AVIL), 310-330 (VLGV…MALL), 339-359 (GAIN…SGYV), and 373-393 (VWNI…TWSV). Asparagine 401 is a glycosylation site (N-linked (GlcNAc...) asparagine). The next 4 membrane-spanning stretches (helical) occupy residues 412–432 (ILLL…IGGI), 469–489 (VGGF…FATV), 499–519 (GILF…SIAL), and 535–555 (SVLS…FYYA). Asparagine 559 is a glycosylation site (N-linked (GlcNAc...) asparagine). The chain crosses the membrane as a helical span at residues 570 to 590 (FGYSLLTGYVFFLMLGTISFF).

It belongs to the nonaspanin (TM9SF) (TC 9.A.2) family.

The protein localises to the lysosome membrane. It localises to the cytoplasmic vesicle. It is found in the autophagosome membrane. Functionally, plays an essential role in autophagy. The polypeptide is Transmembrane 9 superfamily member 1 (Tm9sf1) (Mus musculus (Mouse)).